A 134-amino-acid polypeptide reads, in one-letter code: Protein Turandot E (134 aa).

The signal sequence occupies residues 1–38; the sequence is MSYTRTVHSSTSILKMNSALQISCLLVVLGCLLGSGHC.

It belongs to the Turandot family.

The protein resides in the secreted. Its function is as follows. A humoral factor that may play a role in stress tolerance. This chain is Protein Turandot E, found in Drosophila simulans (Fruit fly).